The following is a 404-amino-acid chain: E3 ubiquitin-protein ligase RNF128 (404 aa).

A signal peptide spans 1–31; sequence MGALKMRCQCFPLPYLSLLALLLLNLSLTRA. The PA domain occupies 62–166; sequence DSPIERAAGL…LKGNEIVDLI (105 aa). The helical transmembrane segment at 191 to 211 threads the bilayer; the sequence is IFFVSVSFFIVTAATVGYFIF. Residues 260-301 form an RING-type; atypical zinc finger; it reads CAVCIEPYKPSDVVRILTCNHFFHKNCIDPWLLEHRTCPMCK. Residues 336-356 are disordered; sequence ITEEENHSETASSGYASVRGG.

Post-translationally, auto-ubiquitinated. As to expression, expressed in the cement gland, cranial placodes, and the pronephros.

It is found in the endomembrane system. The protein resides in the cytoplasm. It localises to the perinuclear region. It catalyses the reaction S-ubiquitinyl-[E2 ubiquitin-conjugating enzyme]-L-cysteine + [acceptor protein]-L-lysine = [E2 ubiquitin-conjugating enzyme]-L-cysteine + N(6)-ubiquitinyl-[acceptor protein]-L-lysine.. It functions in the pathway protein modification; protein ubiquitination. In terms of biological role, E3 ubiquitin-protein ligase that catalyzes polyubiquitin chains. Converts epidermis into cement gland and neural tissue in whole embryos. The protein is E3 ubiquitin-protein ligase RNF128 (rnf128) of Xenopus laevis (African clawed frog).